A 184-amino-acid chain; its full sequence is Photosystem I assembly protein Ycf4 (184 aa).

The next 2 helical transmembrane spans lie at 22-42 (FCWA…GTSS) and 57-77 (ILFF…LFIS).

It belongs to the Ycf4 family.

It localises to the plastid. Its subcellular location is the chloroplast thylakoid membrane. Seems to be required for the assembly of the photosystem I complex. In Panax ginseng (Korean ginseng), this protein is Photosystem I assembly protein Ycf4.